A 279-amino-acid polypeptide reads, in one-letter code: Large ribosomal subunit protein uL2 (279 aa).

The tract at residues 222–264 is disordered; sequence GVAMNPVDHPHGGGEGRTSGGRNPVTPAGKPTKGAKTRVNKAT.

The protein belongs to the universal ribosomal protein uL2 family. Part of the 50S ribosomal subunit. Forms a bridge to the 30S subunit in the 70S ribosome.

One of the primary rRNA binding proteins. Required for association of the 30S and 50S subunits to form the 70S ribosome, for tRNA binding and peptide bond formation. It has been suggested to have peptidyltransferase activity; this is somewhat controversial. Makes several contacts with the 16S rRNA in the 70S ribosome. This chain is Large ribosomal subunit protein uL2, found in Caulobacter sp. (strain K31).